The sequence spans 102 residues: Protein iss (102 aa).

Functionally, increases serum survival and confers group II surface exclusion. The polypeptide is Protein iss (iss) (Escherichia coli).